A 206-amino-acid polypeptide reads, in one-letter code: Ribonuclease HII (206 aa).

Residues 22–206 (RFICGVDEAG…ISFLKNILSL (185 aa)) enclose the RNase H type-2 domain. Residues D28, E29, and D120 each contribute to the a divalent metal cation site.

Belongs to the RNase HII family. The cofactor is Mn(2+). Mg(2+) is required as a cofactor.

It localises to the cytoplasm. The catalysed reaction is Endonucleolytic cleavage to 5'-phosphomonoester.. In terms of biological role, endonuclease that specifically degrades the RNA of RNA-DNA hybrids. In Caldicellulosiruptor bescii (strain ATCC BAA-1888 / DSM 6725 / KCTC 15123 / Z-1320) (Anaerocellum thermophilum), this protein is Ribonuclease HII.